The sequence spans 499 residues: Sialic acid-binding Ig-like lectin 8 (499 aa).

Residues 1-16 form the signal peptide; the sequence is MLLLLLLLPLLWGTKG. The Extracellular segment spans residues 17–363; the sequence is MEGDRQYGDG…RPVSQVTLAA (347 aa). A carbohydrate contacts are provided by residues Tyr-23, 72–75, Arg-125, and 134–138; these read RPYQ and SYKSQ. One can recognise an Ig-like V-type domain in the interval 40–123; that stretch reads GLCVHVPCSF…ARKRDKGSYF (84 aa). Intrachain disulfides connect Cys-42–Cys-181, Cys-47–Cys-107, and Cys-175–Cys-224. Ig-like C2-type domains lie at 157–240 and 246–344; these read PDIL…STVR and PPWN…LSLS. Asn-172 is a glycosylation site (N-linked (GlcNAc...) asparagine). N-linked (GlcNAc...) asparagine glycosylation is found at Asn-249 and Asn-267. Residues Cys-283 and Cys-328 are joined by a disulfide bond. Residues 364 to 384 form a helical membrane-spanning segment; sequence VGGAGATALAFLSFCIIFIIV. The Cytoplasmic portion of the chain corresponds to 385-499; that stretch reads RSCRKKSARP…HNPSSKEVRG (115 aa). Positions 410–443 are disordered; that stretch reads RGSASQGPLTESWKDGNPLKKPPPAVAPSSGEEG. The ITIM motif motif lies at 445 to 450; the sequence is LHYATL. Disordered stretches follow at residues 451 to 470 and 478 to 499; these read SFHK…DSEY and RETA…EVRG. An SLAM-like motif motif is present at residues 468–473; it reads SEYSEI.

This sequence belongs to the immunoglobulin superfamily. SIGLEC (sialic acid binding Ig-like lectin) family. Expressed specifically on blood cells namely basophil, mast cells and eosinophils.

The protein resides in the membrane. In terms of biological role, putative adhesion molecule that mediates sialic-acid dependent binding to blood cells. Preferentially binds to alpha-2,3-linked sialic acid. Also binds to alpha-2,6-linked sialic acid. The sialic acid recognition site may be masked by cis interactions with sialic acids on the same cell surface. Recognizes simultaneously epitopes having a terminal N-acetylneuraminic acid (sialic acid) and an underlying 6-O-sulfated galactose. Preferentially binds to Gal-6-sulfated sialyl-Lewis X glycan epitopes. This chain is Sialic acid-binding Ig-like lectin 8 (SIGLEC8), found in Homo sapiens (Human).